The chain runs to 158 residues: MNETIVCVVGNVATRPVYRELASGASARFRLAVTSRYWDREKSEWKDGHTNFFTVWANRALATNVGASLSVGDPVVVQGRLKVRTEAREGQNWTSADIDALAVGHDLSRGTSAFRRPSAKDGEAGVSPAARPEPNWETEPGSQPSVEHQPQPEPAGVT.

The SSB domain maps to 1-107; it reads MNETIVCVVG…IDALAVGHDL (107 aa). Residues 109-158 form a disordered region; that stretch reads RGTSAFRRPSAKDGEAGVSPAARPEPNWETEPGSQPSVEHQPQPEPAGVT.

As to quaternary structure, homotetramer.

The protein is Single-stranded DNA-binding protein 2 (ssb2) of Streptomyces avermitilis (strain ATCC 31267 / DSM 46492 / JCM 5070 / NBRC 14893 / NCIMB 12804 / NRRL 8165 / MA-4680).